Here is a 242-residue protein sequence, read N- to C-terminus: Ubiquinone biosynthesis O-methyltransferase (242 aa).

Residues arginine 36, glycine 56, aspartate 77, and methionine 130 each contribute to the S-adenosyl-L-methionine site.

This sequence belongs to the methyltransferase superfamily. UbiG/COQ3 family.

The catalysed reaction is a 3-demethylubiquinol + S-adenosyl-L-methionine = a ubiquinol + S-adenosyl-L-homocysteine + H(+). It carries out the reaction a 3-(all-trans-polyprenyl)benzene-1,2-diol + S-adenosyl-L-methionine = a 2-methoxy-6-(all-trans-polyprenyl)phenol + S-adenosyl-L-homocysteine + H(+). It participates in cofactor biosynthesis; ubiquinone biosynthesis. Functionally, O-methyltransferase that catalyzes the 2 O-methylation steps in the ubiquinone biosynthetic pathway. This is Ubiquinone biosynthesis O-methyltransferase from Pasteurella multocida (strain Pm70).